The primary structure comprises 295 residues: Craniofacial development protein 1 (295 aa).

Composition is skewed to acidic residues over residues 1-18 (MEEF…DEDY) and 25-43 (YSED…DGEE). 2 disordered regions span residues 1 to 155 (MEEF…KPKE) and 188 to 219 (FLKQ…RTSG). Over residues 49–65 (KGKRRKAQSIPARKRKQ) the composition is skewed to basic residues. Acidic residues predominate over residues 70–93 (LDEEEDGEEDSGGSSREEDEEEQE). Ser-80, Ser-83, Ser-84, and Ser-112 each carry phosphoserine. Low complexity predominate over residues 120-130 (KSKAASSSQVK). 2 stretches are compositionally biased toward basic and acidic residues: residues 145-155 (VKADELEKPKE) and 188-197 (FLKQTEKEKP). Lys-146 participates in a covalent cross-link: Glycyl lysine isopeptide (Lys-Gly) (interchain with G-Cter in SUMO2). Residues 174-213 (VTKEVDATSKEAKSFLKQTEKEKPQALVTSAATPPPAGSG) are hydrophilic. Ser-212 is modified (phosphoserine). In terms of domain architecture, BCNT-C spans 214 to 295 (IKRTSGMSSL…RDLRLSKMKP (82 aa)). Residue Lys-215 is modified to N6-methyllysine. The residue at position 246 (Ser-246) is a Phosphoserine.

Its subcellular location is the chromosome. It localises to the centromere. It is found in the kinetochore. Its function is as follows. May play a role during embryogenesis. The sequence is that of Craniofacial development protein 1 (Cfdp1) from Rattus norvegicus (Rat).